The following is a 382-amino-acid chain: G2/mitotic-specific cyclin-B2 (382 aa).

The span at 1–12 (MSSVEAVTQQQL) shows a compositional bias: polar residues. Residues 1-78 (MSSVEAVTQQ…HTSAGDPAPI (78 aa)) form a disordered region. Positions 38-47 (NRNAAAAANR) are enriched in low complexity.

It belongs to the cyclin family. Cyclin AB subfamily. Interacts with the CDK1 protein kinase to form a serine/threonine kinase holoenzyme complex also known as maturation promoting factor (MPF). The cyclin subunit imparts substrate specificity to the complex.

Its function is as follows. Essential for the control of the cell cycle at the G2/M (mitosis) transition. This Oryzias javanicus (Javanese ricefish) protein is G2/mitotic-specific cyclin-B2 (ccnb2).